Consider the following 285-residue polypeptide: UPF0354 protein SH1179 (285 aa).

This sequence belongs to the UPF0354 family.

The sequence is that of UPF0354 protein SH1179 from Staphylococcus haemolyticus (strain JCSC1435).